Reading from the N-terminus, the 474-residue chain is Aspartyl/glutamyl-tRNA(Asn/Gln) amidotransferase subunit B (474 aa).

Belongs to the GatB/GatE family. GatB subfamily. In terms of assembly, heterotrimer of A, B and C subunits.

The catalysed reaction is L-glutamyl-tRNA(Gln) + L-glutamine + ATP + H2O = L-glutaminyl-tRNA(Gln) + L-glutamate + ADP + phosphate + H(+). It catalyses the reaction L-aspartyl-tRNA(Asn) + L-glutamine + ATP + H2O = L-asparaginyl-tRNA(Asn) + L-glutamate + ADP + phosphate + 2 H(+). In terms of biological role, allows the formation of correctly charged Asn-tRNA(Asn) or Gln-tRNA(Gln) through the transamidation of misacylated Asp-tRNA(Asn) or Glu-tRNA(Gln) in organisms which lack either or both of asparaginyl-tRNA or glutaminyl-tRNA synthetases. The reaction takes place in the presence of glutamine and ATP through an activated phospho-Asp-tRNA(Asn) or phospho-Glu-tRNA(Gln). This Lactiplantibacillus plantarum (strain ATCC BAA-793 / NCIMB 8826 / WCFS1) (Lactobacillus plantarum) protein is Aspartyl/glutamyl-tRNA(Asn/Gln) amidotransferase subunit B.